We begin with the raw amino-acid sequence, 294 residues long: Phenylalanine-4-hydroxylase (294 aa).

The segment at 1–20 (MSGDGLSNGPPPGARPDWTI) is disordered. Positions 129, 134, and 175 each coordinate Fe cation.

This sequence belongs to the biopterin-dependent aromatic amino acid hydroxylase family. It depends on Fe(2+) as a cofactor.

The catalysed reaction is (6R)-L-erythro-5,6,7,8-tetrahydrobiopterin + L-phenylalanine + O2 = (4aS,6R)-4a-hydroxy-L-erythro-5,6,7,8-tetrahydrobiopterin + L-tyrosine. The protein operates within amino-acid degradation; L-phenylalanine degradation; acetoacetate and fumarate from L-phenylalanine: step 1/6. The chain is Phenylalanine-4-hydroxylase (phhA) from Caulobacter vibrioides (strain ATCC 19089 / CIP 103742 / CB 15) (Caulobacter crescentus).